Consider the following 431-residue polypeptide: Probable oxidoreductase OrdL (431 aa).

This chain is Probable oxidoreductase OrdL (ordL), found in Haemophilus influenzae (strain ATCC 51907 / DSM 11121 / KW20 / Rd).